A 315-amino-acid chain; its full sequence is Secreted mono- and diacylglycerol lipase LIP2 (315 aa).

The first 21 residues, 1 to 21, serve as a signal peptide directing secretion; it reads MACFRVILYLSVIFFVQCVFA. C68 and C308 are oxidised to a cystine. An N-linked (GlcNAc...) asparagine glycan is attached at N74. S182 acts as the Nucleophile in catalysis. D240 is an active-site residue. The N-linked (GlcNAc...) asparagine glycan is linked to N265. H292 is an active-site residue.

Belongs to the AB hydrolase superfamily. Lipase family. Class 3 subfamily.

The protein resides in the secreted. The enzyme catalyses a monoacylglycerol + H2O = glycerol + a fatty acid + H(+). The catalysed reaction is a diacylglycerol + H2O = a monoacylglycerol + a fatty acid + H(+). Functionally, secreted lipase involved in Dandruff and seborrheic dermatitis (D/SD) probably via lipase-mediated breakdown of sebaceous lipids and release of irritating free fatty acids. Shows activity against monoglyceride and diglyceride substrates and generates free oleic acid from the substrates mono- and diolein. Able to cleave the oleic acid from both the 1 and the 2 position of the glycerol backbone as 1,2 isomers of diolein were converted into oleic acid and glycerol. Due to an absence of fatty acid synthase genes in Malassezia species, secretory lipases are essential for the yeast to generate free fatty acids from degradation of sebum and assimilate them as lipid sources for growth. Plays an essential role at the pathogen-host interface during disease progression. Also performs the reverse reaction to build diacylglycerols from monoacylglycerols. This is Secreted mono- and diacylglycerol lipase LIP2 from Malassezia restricta (Seborrheic dermatitis infection agent).